Reading from the N-terminus, the 240-residue chain is UDP-2,3-diacylglucosamine hydrolase (240 aa).

The Mn(2+) site is built by aspartate 8, histidine 10, aspartate 41, asparagine 79, and histidine 114. A substrate-binding site is contributed by 79–80; it reads NR. 5 residues coordinate substrate: aspartate 122, serine 160, asparagine 164, lysine 167, and histidine 195. Positions 195 and 197 each coordinate Mn(2+).

It belongs to the LpxH family. It depends on Mn(2+) as a cofactor.

The protein resides in the cell inner membrane. The enzyme catalyses UDP-2-N,3-O-bis[(3R)-3-hydroxytetradecanoyl]-alpha-D-glucosamine + H2O = 2-N,3-O-bis[(3R)-3-hydroxytetradecanoyl]-alpha-D-glucosaminyl 1-phosphate + UMP + 2 H(+). It participates in glycolipid biosynthesis; lipid IV(A) biosynthesis; lipid IV(A) from (3R)-3-hydroxytetradecanoyl-[acyl-carrier-protein] and UDP-N-acetyl-alpha-D-glucosamine: step 4/6. Functionally, hydrolyzes the pyrophosphate bond of UDP-2,3-diacylglucosamine to yield 2,3-diacylglucosamine 1-phosphate (lipid X) and UMP by catalyzing the attack of water at the alpha-P atom. Involved in the biosynthesis of lipid A, a phosphorylated glycolipid that anchors the lipopolysaccharide to the outer membrane of the cell. In Salmonella agona (strain SL483), this protein is UDP-2,3-diacylglucosamine hydrolase.